The following is a 3021-amino-acid chain: Genome polyprotein (3021 aa).

Serine 2 carries the N-acetylserine; by host modification. The interaction with STAT1 stretch occupies residues 2 to 23 (STLPKPQRKTKRNTIRRPQDVK). The interval 2–58 (STLPKPQRKTKRNTIRRPQDVKFPGGGQIVGGVYVLPRRGPRLGVRATRKTSERSQP) is interaction with EIF2AK2/PKR. The interaction with DDX3X stretch occupies residues 2-59 (STLPKPQRKTKRNTIRRPQDVKFPGGGQIVGGVYVLPRRGPRLGVRATRKTSERSQPR). The tract at residues 2–75 (STLPKPQRKT…PKARRSEGRS (74 aa)) is disordered. Residues 2 to 168 (STLPKPQRKT…EDGINFATGN (167 aa)) are Cytoplasmic-facing. Short sequence motifs (nuclear localization signal) lie at residues 5–13 (PKPQRKTKR) and 38–43 (PRRGPR). Over residues 7–16 (PQRKTKRNTI) the composition is skewed to basic residues. Serine 53 is subject to Phosphoserine; by host. 2 consecutive short sequence motifs (nuclear localization signal) follow at residues 58–64 (PRGRRQP) and 66–71 (PKARRS). Basic residues predominate over residues 58–68 (PRGRRQPIPKA). At serine 99 the chain carries Phosphoserine; by host. The tract at residues 112-152 (PRRRSRNLGKVIDTLTCGFADLMGYIPLVGAPVGGVARALA) is important for endoplasmic reticulum and mitochondrial localization. Serine 116 bears the Phosphoserine; by host PKA mark. The tract at residues 122-173 (VIDTLTCGFADLMGYIPLVGAPVGGVARALAHGVRALEDGINFATGNLPGCS) is interaction with APOA2. The important for lipid droplets localization stretch occupies residues 164-167 (FATG). A helical membrane pass occupies residues 169-189 (LPGCSFSIFLLALFSCLIHPA). Residues 178–191 (LLALFSCLIHPAAS) constitute a propeptide, ER anchor for the core protein, removed in mature form by host signal peptidase. The Lumenal segment spans residues 190–358 (ASLEWRNTSG…AGAHWGILAG (169 aa)). Asparagine 196, asparagine 209, and asparagine 234 each carry an N-linked (GlcNAc...) asparagine; by host glycan. The segment at 265 to 296 (LVGAATMCSALYVGDMCGAVFLVGQAFTFRPR) is important for fusion. Asparagine 305 is a glycosylation site (N-linked (GlcNAc...) asparagine; by host). The chain crosses the membrane as a helical span at residues 359–379 (LAYYSMQGNWAKVAIIMVMFS). Over 380–731 (GVDAHTYTTG…WEFVILVFLL (352 aa)) the chain is Lumenal. The HVR1 stretch occupies residues 385-412 (TYTTGGTASRHTQAFAGLFDIGPQQKLQ). Residues asparagine 417, asparagine 423, and asparagine 430 are each glycosylated (N-linked (GlcNAc...) (high mannose) asparagine; by host). 4 disulfide bridges follow: cysteine 429-cysteine 553, cysteine 452-cysteine 459, cysteine 487-cysteine 495, and cysteine 504-cysteine 509. Asparagine 448 carries N-linked (GlcNAc...) asparagine; by host glycosylation. The interval 474–479 (DANITG) is HVR2. N-linked (GlcNAc...) asparagine; by host glycosylation is present at asparagine 476. The interval 481–494 (SDDRPYCWHYAPRP) is CD81-binding 1. Residue asparagine 533 is glycosylated (N-linked (GlcNAc...) asparagine; by host). The segment at 545 to 552 (PPSGRWFG) is CD81-binding 2. A glycan (N-linked (GlcNAc...) asparagine; by host) is linked at asparagine 557. Cysteine 565 and cysteine 570 are oxidised to a cystine. Asparagine 578 carries N-linked (GlcNAc...) asparagine; by host glycosylation. 3 cysteine pairs are disulfide-bonded: cysteine 587–cysteine 591, cysteine 603–cysteine 626, and cysteine 613–cysteine 650. Residue asparagine 651 is glycosylated (N-linked (GlcNAc...) (high mannose) asparagine; by host). A disulfide bridge connects residues cysteine 658 and cysteine 683. Residues 666–677 (SEQHPLLHSTTE) form a PKR/eIF2-alpha phosphorylation homology domain (PePHD) region. The chain crosses the membrane as a helical span at residues 732–752 (LADARVCVALWLMLMISQTEA). Residues 753–763 (ALENLVTLNAV) lie on the Lumenal side of the membrane. A helical membrane pass occupies residues 764–784 (AAAGTHGIGWYLVAFCAAWYV). Over 785-787 (RGK) the chain is Cytoplasmic. The chain crosses the membrane as a helical span at residues 788 to 809 (LVPLVTYSLTGLWSLALLVLLL). At 810-819 (PQRAYAWSGE) the chain is on the lumenal side. A helical membrane pass occupies residues 820–840 (DSATLGAGVLVLFGFFTLSPW). Residues 841–844 (YKHW) are Cytoplasmic-facing. The chain crosses the membrane as a helical span at residues 845 to 864 (IGRLMWWNQYTICRCESALH). Topologically, residues 865–887 (VWVPPLLARGSRDGVILLTSLLY) are lumenal. The chain crosses the membrane as a helical span at residues 888–908 (PSLIFDITKLLMAVLGPLYLI). Residues 905 to 1032 (LYLIQATITT…DYREMGWRLL (128 aa)) enclose the Peptidase C18 domain. Residues 909–1663 (QATITTTPYF…CMSADLEVTT (755 aa)) lie on the Cytoplasmic side of the membrane. A protease NS2-3 region spans residues 910–1212 (ATITTTPYFV…PVETLSTQAR (303 aa)). Residue cysteine 928 is the site of S-palmitoyl cysteine; by host attachment. Positions 935–955 (IGGKYFQMIILSIGRWFNTYL) are interaction with host SCPS1. Active-site for protease NS2 activity; shared with dimeric partner residues include histidine 958, glutamate 978, and cysteine 999. The Peptidase S29 domain occupies 1033-1214 (APITAYAQQT…ETLSTQARSP (182 aa)). Active-site charge relay system; for serine protease NS3 activity residues include histidine 1089 and aspartate 1113. Zn(2+)-binding residues include cysteine 1129 and cysteine 1131. Serine 1171 (charge relay system; for serine protease NS3 activity) is an active-site residue. Residues cysteine 1177 and histidine 1181 each coordinate Zn(2+). The region spanning 1223–1375 (PAVPQSYQVG…SNIEEVALGS (153 aa)) is the Helicase ATP-binding domain. 1236–1243 (APTGSGKS) is a binding site for ATP. Residues serine 1243 and glutamate 1323 each coordinate Mg(2+). A DECH box motif is present at residues 1322–1325 (DECH). The Helicase C-terminal domain occupies 1382–1544 (YGKAIPIALL…DLQPAETTVR (163 aa)). The RNA-binding stretch occupies residues 1492–1504 (QRRGRTGRGRLGT). Residues 1664-1684 (STWVLLGGVLAALAAYCLSVG) form a helical membrane-spanning segment. Positions 1685-1696 (CVVIVGHIELEG) are NS3-binding. The Cytoplasmic portion of the chain corresponds to 1685 to 1811 (CVVIVGHIEL…SVTSPLTTNQ (127 aa)). The chain crosses the membrane as a helical span at residues 1812–1830 (TMFFNILGGWVATHLAGPQ). The Lumenal segment spans residues 1831 to 1834 (SSSA). A helical transmembrane segment spans residues 1835-1855 (FVVSGLAGAAIGGIGLGRVLL). Position 1856 (aspartate 1856) is a topological domain, cytoplasmic. Residues 1857-1877 (ILAGYGAGVSGALVAFKIMGG) form a helical membrane-spanning segment. Residues 1878–1887 (ECPTAEDMVN) are Lumenal-facing. Residues 1888-1908 (LLPAILSPGALVVGVICAAIL) traverse the membrane as a helical segment. Topologically, residues 1909 to 1978 (RRHVGPGEGA…WINEDYPSPC (70 aa)) are cytoplasmic. The S-palmitoyl cysteine; by host moiety is linked to residue cysteine 1978. An intramembrane segment occupies 1979-2008 (SDDWLRTIWDWVCSVLADFKAWLSAKIMPA). Residues 2009-3000 (LPGLPFISCQ…YHSVSRARTR (992 aa)) are Cytoplasmic-facing. Cysteine 2017, cysteine 2035, cysteine 2037, and cysteine 2058 together coordinate Zn(2+). The FKBP8-binding stretch occupies residues 2126–2214 (EFFTEVDGVR…ASSSASQLSA (89 aa)). The transcriptional activation stretch occupies residues 2126-2338 (EFFTEVDGVR…PVPPPRRKRT (213 aa)). An interaction with non-structural protein 4A region spans residues 2141–2145 (PPCKP). A disordered region spans residues 2193-2215 (ARRLARGSPPSEASSSASQLSAP). Residues 2195–2448 (RLARGSPPSE…ALITPCSAEE (254 aa)) form an interaction with host SKP2 region. Serine 2200, serine 2203, serine 2207, serine 2210, serine 2213, and serine 2216 each carry phosphoserine; by host. Low complexity predominate over residues 2200–2215 (SPPSEASSSASQLSAP). Positions 2216-2255 (SLKATCQTHRPHPDAELVDANLLWRQEMGSNITRVESETK) are ISDR. Residues 2216–2281 (SLKATCQTHR…VEPSVAAECF (66 aa)) are interaction with EIF2AK2/PKR. An NS4B-binding region spans residues 2255–2312 (KVVVLDSFEPLRAETDDVEPSVAAECFKKPPKYPPALPIWARPDYNPPLLDRWKAPDY). The tract at residues 2305–2387 (DRWKAPDYVP…STTSKVPPSP (83 aa)) is V3. Positions 2328–2331 (PPVP) match the SH3-binding motif. The short motif at 2333 to 2341 (PRRKRTIQL) is the Nuclear localization signal element. A Glycyl lysine isopeptide (Lys-Gly) (interchain with G-Cter in ubiquitin) cross-link involves residue lysine 2356. Residues 2356–2417 (KSFPSSKPQE…DPDLSCDSWS (62 aa)) are disordered. Low complexity-rich tracts occupy residues 2359 to 2381 (PSSK…STTS) and 2388 to 2401 (GGES…SMPP). 2 positions are modified to phosphoserine; by host: serine 2459 and serine 2472. The RdRp catalytic domain maps to 2644–2762 (PLGFSYDTRC…VAESDGVDED (119 aa)). Mg(2+) contacts are provided by aspartate 2650, aspartate 2748, and aspartate 2749. The helical transmembrane segment at 3001 to 3021 (HLLLCLLLLTVGVGIFLLPAR) threads the bilayer.

Belongs to the hepacivirus polyprotein family. In terms of assembly, homooligomer. Interacts with E1 (via C-terminus). Interacts with the non-structural protein 5A. Interacts (via N-terminus) with host STAT1 (via SH2 domain); this interaction results in decreased STAT1 phosphorylation and ubiquitin-mediated proteasome-dependent STAT1 degradation, leading to decreased IFN-stimulated gene transcription. Interacts with host STAT3; this interaction constitutively activates STAT3. Interacts with host LTBR receptor. Interacts with host TNFRSF1A receptor and possibly induces apoptosis. Interacts with host HNRPK. Interacts with host YWHAE. Interacts with host UBE3A/E6AP. Interacts with host DDX3X. Interacts with host APOA2. Interacts with host RXRA protein. Interacts with host SP110 isoform 3/Sp110b; this interaction sequesters the transcriptional corepressor SP110 away from the nucleus. Interacts with host CREB3 nuclear transcription protein; this interaction triggers cell transformation. Interacts with host ACY3. Interacts with host C1QR1. Interacts with host RBM24; this interaction, which enhances the interaction of the mature core protein with 5'-UTR, may inhibit viral translation and favor replication. Interacts with host EIF2AK2/PKR; this interaction induces the autophosphorylation of EIF2AK2. Part of the viral assembly initiation complex composed of NS2, E1, E2, NS3, NS4A, NS5A and the mature core protein. As to quaternary structure, forms a heterodimer with envelope glycoprotein E2. Interacts with mature core protein. Interacts with protease NS2. The heterodimer E1/E2 interacts with host CLDN1; this interaction plays a role in viral entry into host cell. Interacts with host SPSB2 (via C-terminus). Part of the viral assembly initiation complex composed of NS2, E1, E2, NS3, NS4A, NS5A and the mature core protein. Interacts with host NEURL3; this interaction prevents E1 binding to glycoprotein E2. Forms a heterodimer with envelope glycoprotein E1. Interacts with host CD81 and SCARB1 receptors; these interactions play a role in viral entry into host cell. Interacts with host EIF2AK2/PKR; this interaction inhibits EIF2AK2 and probably allows the virus to evade the innate immune response. Interacts with host CD209/DC-SIGN and CLEC4M/DC-SIGNR. Interact with host SPCS1; this interaction is essential for viral particle assembly. Interacts with protease NS2. The heterodimer E1/E2 interacts with host CLDN1; this interaction plays a role in viral entry into host cell. Part of the viral assembly initiation complex composed of NS2, E1, E2, NS3, NS4A, NS5A and the mature core protein. Interacts with host SLC3A2/4F2hc; the interaction may facilitate viral entry into host cell. Interacts with human PLSCR1. In terms of assembly, homohexamer. Homoheptamer. Interacts with protease NS2. As to quaternary structure, homodimer. Interacts with host SPCS1; this interaction is essential for viral particle assembly. Interacts with envelope glycoprotein E1. Interacts with envelope glycoprotein E2. Interacts with viroporin p7. Interacts with serine protease/helicase NS3. Part of the replication complex composed of NS2, NS3, NS4A, NS4B, NS5A and the RNA-directed RNA polymerase embedded in an ER-derived membranous web. Part of the viral assembly initiation complex composed of NS2, E1, E2, NS3, NS4A, NS5A and the mature core protein. Interacts with protease NS2. Interacts with non-structural protein 4A; this interaction stabilizes the folding of NS3 serine protease. NS3-NS4A interaction is essential for NS3 activation and allows membrane anchorage of the latter. NS3/NS4A complex also prevents phosphorylation of host IRF3, thus preventing the establishment of dsRNA induced antiviral state. Interacts with host MAVS; this interaction leads to the cleavage and inhibition of host MAVS. Interacts with host TICAM1; this interaction leads to the cleavage and inhibition of host TICAM1. Interacts with host TANK-binding kinase/TBK1; this interaction results in the inhibition of the association between TBK1 and IRF3, which leads to the inhibition of IRF3 activation. Interacts with host RBM24. Part of the replication complex composed of NS2, NS3, NS4A, NS4B, NS5A and the RNA-directed RNA polymerase embedded in an ER-derived membranous web. Part of the viral assembly initiation complex composed of NS2, E1, E2, NS3, NS4A, NS5A and the mature core protein. In terms of assembly, interacts with NS3 serine protease; this interaction stabilizes the folding of NS3 serine protease. NS3-NS4A interaction is essential for NS3 activation and allows membrane anchorage of the latter. Interacts with non-structural protein 5A (via N-terminus). Part of the replication complex composed of NS2, NS3, NS4A, NS4B, NS5A and the RNA-directed RNA polymerase embedded in an ER-derived membranous web. Part of the viral assembly initiation complex composed of NS2, E1, E2, NS3, NS4A, NS5A and the mature core protein. As to quaternary structure, homomultimer. Interacts with non-structural protein NS5A. Interacts with host PLA2G4C; this interaction likely initiates the recruitment of replication complexes to lipid droplets. Interacts with host STING; this interaction disrupts the interaction between STING and TBK1 thereby suppressing the interferon signaling. Part of the replication complex composed of NS2, NS3, NS4A, NS4B, NS5A and the RNA-directed RNA polymerase embedded in an ER-derived membranous web. Monomer. Homodimer; dimerization is required for RNA-binding. Interacts with the mature core protein. Interacts (via N-terminus) with non-structural protein 4A. Interacts with non-structural protein 4B. Interacts (via region D2) with RNA-directed RNA polymerase. Part of the viral assembly initiation complex composed of NS2, E1, E2, NS3, NS4A, NS5A and the mature core protein. Part of the replication complex composed of NS2, NS3, NS4A, NS4B, NS5A and the RNA-directed RNA polymerase embedded in an ER-derived membranous web. Interacts with host GRB2. Interacts with host BIN1. Interacts with host PIK3R1. Interacts with host SRCAP. Interacts with host FKBP8. Interacts (via C-terminus) with host VAPB (via MSP domain). Interacts with host EIF2AK2/PKR; this interaction leads to disruption of EIF2AK2 dimerization by NS5A and probably allows the virus to evade the innate immune response. Interacts (via N-terminus) with host PACSIN2 (via N-terminus); this interaction attenuates protein kinase C alpha-mediated phosphorylation of PACSIN2 by disrupting the interaction between PACSIN2 and PRKCA. Interacts (via N-terminus) with host SRC kinase (via SH2 domain). Interacts with most Src-family kinases. Interacts with host IFI27 and SKP2; promotes the ubiquitin-mediated proteasomal degradation of NS5A. Interacts with host GPS2. Interacts with host TNFRSF21; this interaction allows the modulation by the virus of JNK, p38 MAPK, STAT3, and Akt signaling pathways in a DR6-dependent manner. Interacts (via N-terminus) with host CIDEB (via N-terminus); this interaction seems to regulate the association of HCV particles with APOE. Interacts with host CHKA/Choline Kinase-alpha; CHKA bridges host PI4KA and NS5A and potentiates NS5A-stimulated PI4KA activity, which then facilitates the targeting of the ternary complex to the ER for viral replication. Interacts with host SPSB2 (via C-terminus); this interaction targets NS5A for ubiquitination and degradation. Interacts with host RAB18; this interaction may promote the association of NS5A and other replicase components with lipid droplets. Interacts (via region D2) with host PPIA/CYPA; the interaction stimulates RNA-binding ability of NS5A and is dependent on the peptidyl-prolyl cis-trans isomerase activity of PPIA/CYPA. Interacts with host TRIM14; this interaction induces the degradation of NS5A. In terms of assembly, homooligomer. Interacts with non-structural protein 5A. Interacts with host VAPB. Interacts with host PRK2/PKN2. Interacts with host HNRNPA1 and SEPT6; these interactions facilitate viral replication. Part of the replication complex composed of NS2, NS3, NS4A, NS4B, NS5A and the RNA-directed RNA polymerase. The cofactor is Zn(2+). Mg(2+) is required as a cofactor. In terms of processing, specific enzymatic cleavages in vivo yield mature proteins. The structural proteins, core, E1, E2 and p7 are produced by proteolytic processing by host signal peptidases. The core protein precursor is synthesized as a 23 kDa, which is retained in the ER membrane through the hydrophobic signal peptide. Cleavage by the signal peptidase releases the 21 kDa mature core protein. The cleavage of the core protein precursor occurs between aminoacids 176 and 188 but the exact cleavage site is not known. Some degraded forms of the core protein appear as well during the course of infection. The other proteins (p7, NS2, NS3, NS4A, NS4B, NS5A and NS5B) are cleaved by the viral proteases. Autoprocessing between NS2 and NS3 is mediated by the NS2 cysteine protease catalytic domain and regulated by the NS3 N-terminal domain. Phosphorylated by host PKC and PKA. Post-translationally, ubiquitinated; mediated by UBE3A and leading to core protein subsequent proteasomal degradation. In terms of processing, highly N-glycosylated. Palmitoylation is required for NS2/3 autoprocessing and E2 recruitment to membranes. Post-translationally, palmitoylated. This modification may play a role in its polymerization or in protein-protein interactions. In terms of processing, phosphorylated on serines in a basal form termed p56. p58 is a hyperphosphorylated form of p56. p56 and p58 coexist in the cell in roughly equivalent amounts. Hyperphosphorylation is dependent on the presence of NS4A. Host CSNK1A1/CKI-alpha or RPS6KB1 kinases may be responsible for NS5A phosphorylation. Tyrosine phosphorylation is essential for the interaction with host SRC. Post-translationally, ubiquitinated. Ubiquitination, most probably at Lys-2350, mediated by host IFI27 and SKP2 leads to proteasomal degradation, restricting viral infection. Ubiquitination by host TRIM22 leads to interruption of viral replication. In terms of processing, the N-terminus is phosphorylated by host PRK2/PKN2.

The protein resides in the host endoplasmic reticulum membrane. The protein localises to the host mitochondrion membrane. Its subcellular location is the virion. It localises to the host cytoplasm. It is found in the host nucleus. The protein resides in the host lipid droplet. The protein localises to the virion membrane. Its subcellular location is the host mitochondrion. It localises to the host cell membrane. It is found in the host perinuclear region. It carries out the reaction Hydrolysis of four peptide bonds in the viral precursor polyprotein, commonly with Asp or Glu in the P6 position, Cys or Thr in P1 and Ser or Ala in P1'.. The catalysed reaction is a ribonucleoside 5'-triphosphate + H2O = a ribonucleoside 5'-diphosphate + phosphate + H(+). It catalyses the reaction ATP + H2O = ADP + phosphate + H(+). The enzyme catalyses RNA(n) + a ribonucleoside 5'-triphosphate = RNA(n+1) + diphosphate. Inhibited by the antiviral drug hexamethylene amiloride. Inhibition by amantadine appears to be genotype-dependent. Also inhibited by long-alkyl-chain iminosugar derivatives. Its activity is regulated as follows. Activity is up-regulated by PRK2/PKN2-mediated phosphorylation. Packages viral RNA to form a viral nucleocapsid, and promotes virion budding. Participates in the viral particle production as a result of its interaction with the non-structural protein 5A. Binds RNA and may function as a RNA chaperone to induce the RNA structural rearrangements taking place during virus replication. Modulates viral translation initiation by interacting with viral IRES and 40S ribosomal subunit. Affects various cell signaling pathways, host immunity and lipid metabolism. Prevents the establishment of cellular antiviral state by blocking the interferon-alpha/beta (IFN-alpha/beta) and IFN-gamma signaling pathways and by blocking the formation of phosphorylated STAT1 and promoting ubiquitin-mediated proteasome-dependent degradation of STAT1. Activates STAT3 leading to cellular transformation. Regulates the activity of cellular genes, including c-myc and c-fos. May repress the promoter of p53, and sequester CREB3 and SP110 isoform 3/Sp110b in the cytoplasm. Represses cell cycle negative regulating factor CDKN1A, thereby interrupting an important check point of normal cell cycle regulation. Targets transcription factors involved in the regulation of inflammatory responses and in the immune response: suppresses TNF-induced NF-kappa-B activation, and activates AP-1. Binds to dendritic cells (DCs) via C1QR1, resulting in down-regulation of T-lymphocytes proliferation. Alters lipid metabolism by interacting with hepatocellular proteins involved in lipid accumulation and storage. Induces up-regulation of FAS promoter activity, and thereby contributes to the increased triglyceride accumulation in hepatocytes (steatosis). Functionally, forms a heterodimer with envelope glycoprotein E2, which mediates virus attachment to the host cell, virion internalization through clathrin-dependent endocytosis and fusion with host membrane. Fusion with the host cell is most likely mediated by both E1 and E2, through conformational rearrangements of the heterodimer required for fusion rather than a classical class II fusion mechanism. E1/E2 heterodimer binds host apolipoproteins such as APOB and ApoE thereby forming a lipo-viro-particle (LVP). APOE associated to the LVP allows the initial virus attachment to cell surface receptors such as the heparan sulfate proteoglycans (HSPGs), syndecan-1 (SDC1), syndecan-1 (SDC2), the low-density lipoprotein receptor (LDLR) and scavenger receptor class B type I (SCARB1). The cholesterol transfer activity of SCARB1 allows E2 exposure and binding of E2 to SCARB1 and the tetraspanin CD81. E1/E2 heterodimer binding on CD81 activates the epithelial growth factor receptor (EGFR) signaling pathway. Diffusion of the complex E1-E2-EGFR-SCARB1-CD81 to the cell lateral membrane allows further interaction with Claudin 1 (CLDN1) and occludin (OCLN) to finally trigger HCV entry. In terms of biological role, forms a heterodimer with envelope glycoprotein E1, which mediates virus attachment to the host cell, virion internalization through clathrin-dependent endocytosis and fusion with host membrane. Fusion with the host cell is most likely mediated by both E1 and E2, through conformational rearrangements of the heterodimer required for fusion rather than a classical class II fusion mechanism. The interaction between envelope glycoprotein E2 and host apolipoprotein E/APOE allows the proper assembly, maturation and infectivity of the viral particles. This interaction is probably promoted via the up-regulation of cellular autophagy by the virus. E1/E2 heterodimer binds host apolipoproteins such as APOB and APOE thereby forming a lipo-viro-particle (LVP). APOE associated to the LVP allows the initial virus attachment to cell surface receptors such as the heparan sulfate proteoglycans (HSPGs), syndecan-1 (SDC1), syndecan-1 (SDC2), the low-density lipoprotein receptor (LDLR) and scavenger receptor class B type I (SCARB1). The cholesterol transfer activity of SCARB1 allows E2 exposure and binding of E2 to SCARB1 and the tetraspanin CD81. E1/E2 heterodimer binding on CD81 activates the epithelial growth factor receptor (EGFR) signaling pathway. Diffusion of the complex E1-E2-EGFR-SCARB1-CD81 to the cell lateral membrane allows further interaction with Claudin 1 (CLDN1) and occludin (OCLN) to finally trigger HCV entry. Inhibits host EIF2AK2/PKR activation, preventing the establishment of an antiviral state. Viral ligand for CD209/DC-SIGN and CLEC4M/DC-SIGNR, which are respectively found on dendritic cells (DCs), and on liver sinusoidal endothelial cells and macrophage-like cells of lymph node sinuses. These interactions allow the capture of circulating HCV particles by these cells and subsequent facilitated transmission to permissive cells such as hepatocytes and lymphocyte subpopulations. The interaction between E2 and host amino acid transporter complex formed by SLC3A2 and SLC7A5/LAT1 may facilitate viral entry into host cell. Its function is as follows. Ion channel protein that acts as a viroporin and plays an essential role in the assembly, envelopment and secretion of viral particles. Regulates the host cell secretory pathway, which induces the intracellular retention of viral glycoproteins and favors assembly of viral particles. Creates a pore in acidic organelles and releases Ca(2+) and H(+) in the cytoplasm of infected cells, leading to a productive viral infection. High levels of cytoplasmic Ca(2+) may trigger membrane trafficking and transport of viral ER-associated proteins to viroplasms, sites of viral genome replication. This ionic imbalance induces the assembly of the inflammasome complex, which triggers the maturation of pro-IL-1beta into IL-1beta through the action of caspase-1. Targets also host mitochondria and induces mitochondrial depolarization. In addition of its role as a viroporin, acts as a lipid raft adhesion factor. Cysteine protease required for the proteolytic auto-cleavage between the non-structural proteins NS2 and NS3. The N-terminus of NS3 is required for the function of NS2 protease (active region NS2-3). Promotes the initiation of viral particle assembly by mediating the interaction between structural and non-structural proteins. Functionally, displays three enzymatic activities: serine protease with a chymotrypsin-like fold, NTPase and RNA helicase. NS3 serine protease, in association with NS4A, is responsible for the cleavages of NS3-NS4A, NS4A-NS4B, NS4B-NS5A and NS5A-NS5B. The NS3/NS4A complex prevents phosphorylation of host IRF3, thus preventing the establishment of dsRNA induced antiviral state. The NS3/NS4A complex induces host amino acid transporter component SLC3A2, thus contributing to HCV propagation. NS3 RNA helicase binds to RNA and unwinds both dsDNA and dsRNA in the 3' to 5' direction, and likely resolves RNA complicated stable secondary structures in the template strand. Binds a single ATP and catalyzes the unzipping of a single base pair of dsRNA. Inhibits host antiviral proteins TBK1 and IRF3 thereby preventing the establishment of an antiviral state. Cleaves host MAVS/CARDIF thereby preventing the establishment of an antiviral state. Cleaves host TICAM1/TRIF, thereby disrupting TLR3 signaling and preventing the establishment of an antiviral state. In terms of biological role, peptide cofactor which forms a non-covalent complex with the N-terminal of NS3 serine protease. The NS3/NS4A complex prevents phosphorylation of host IRF3, thus preventing the establishment of dsRNA induced antiviral state. The NS3/NS4A complex induces host amino acid transporter component SLC3A2, thus contributing to HCV propagation. Its function is as follows. Induces a specific membrane alteration that serves as a scaffold for the virus replication complex. This membrane alteration gives rise to the so-called ER-derived membranous web that contains the replication complex. NS4B self-interaction contributes to its function in membranous web formation. Promotes host TRIF protein degradation in a CASP8-dependent manner thereby inhibiting host TLR3-mediated interferon signaling. Disrupts the interaction between STING and TBK1 contributing to the inhibition of interferon signaling. Phosphorylated protein that is indispensable for viral replication and assembly. Both hypo- and hyperphosphorylated states are required for the viral life cycle. The hyperphosphorylated form of NS5A is an inhibitor of viral replication. Involved in RNA-binding and especially in binding to the viral genome. Zinc is essential for RNA-binding. Participates in the viral particle production as a result of its interaction with the mature viral core protein. Its interaction with host VAPB may target the viral replication complex to vesicles. Down-regulates viral IRES translation initiation. Mediates interferon resistance, presumably by interacting with and inhibiting host EIF2AK2/PKR. Prevents BIN1-induced apoptosis. Acts as a transcriptional activator of some host genes important for viral replication when localized in the nucleus. Via the interaction with host PACSIN2, modulates lipid droplet formation in order to promote virion assembly. Modulates TNFRSF21/DR6 signaling pathway for viral propagation. Functionally, RNA-dependent RNA polymerase that performs primer-template recognition and RNA synthesis during viral replication. Initiates RNA transcription/replication at a flavin adenine dinucleotide (FAD), resulting in a 5'- FAD cap on viral RNAs. In this way, recognition of viral 5' RNA by host pattern recognition receptors can be bypassed, thereby evading activation of antiviral pathways. This chain is Genome polyprotein, found in Homo sapiens (Human).